We begin with the raw amino-acid sequence, 277 residues long: Indole-3-glycerol phosphate synthase (277 aa).

This sequence belongs to the TrpC family.

The catalysed reaction is 1-(2-carboxyphenylamino)-1-deoxy-D-ribulose 5-phosphate + H(+) = (1S,2R)-1-C-(indol-3-yl)glycerol 3-phosphate + CO2 + H2O. The protein operates within amino-acid biosynthesis; L-tryptophan biosynthesis; L-tryptophan from chorismate: step 4/5. The sequence is that of Indole-3-glycerol phosphate synthase from Pseudomonas putida (strain GB-1).